A 302-amino-acid chain; its full sequence is MIAASFLLNLLIYPFLINLFRKKSVGQYIRKEGPDLHGYKEGTPTMGGILFVLIGLLFGVLSKENGVILTGAFLFFLIGFLDDFLSIAKKNSTGLRAYQKALLQIAAASVVIAFSQPETAVDFFGIKLEMGAWYYLLALIVIVGSSNAMNLTDGLDGLAGWVYISGAIPYWFFLKEKGFSENIIILLSAGVLAFLIFNSKPARIFMGDTGSIALGGTLGVVSVLTKTEFYLIVFFPILVVETLSVILQILSFKLFKRRIFRMAPLHHHFELLSWEEEKIVAVFTIFNLISSLIALEVFGVIG.

A run of 10 helical transmembrane segments spans residues 1–21 (MIAA…NLFR), 42–62 (GTPT…GVLS), 67–87 (VILT…FLSI), 101–121 (ALLQ…ETAV), 123–143 (FFGI…IVIV), 154–174 (GLDG…WFFL), 178–198 (GFSE…LIFN), 204–224 (IFMG…VSVL), 229–249 (FYLI…ILQI), and 279–299 (IVAV…EVFG).

The protein belongs to the glycosyltransferase 4 family. MraY subfamily. Mg(2+) serves as cofactor.

It is found in the cell inner membrane. The catalysed reaction is UDP-N-acetyl-alpha-D-muramoyl-L-alanyl-gamma-D-glutamyl-meso-2,6-diaminopimeloyl-D-alanyl-D-alanine + di-trans,octa-cis-undecaprenyl phosphate = di-trans,octa-cis-undecaprenyl diphospho-N-acetyl-alpha-D-muramoyl-L-alanyl-D-glutamyl-meso-2,6-diaminopimeloyl-D-alanyl-D-alanine + UMP. It participates in cell wall biogenesis; peptidoglycan biosynthesis. Its function is as follows. Catalyzes the initial step of the lipid cycle reactions in the biosynthesis of the cell wall peptidoglycan: transfers peptidoglycan precursor phospho-MurNAc-pentapeptide from UDP-MurNAc-pentapeptide onto the lipid carrier undecaprenyl phosphate, yielding undecaprenyl-pyrophosphoryl-MurNAc-pentapeptide, known as lipid I. This is Phospho-N-acetylmuramoyl-pentapeptide-transferase from Thermotoga neapolitana (strain ATCC 49049 / DSM 4359 / NBRC 107923 / NS-E).